Reading from the N-terminus, the 592-residue chain is Leucine-rich repeat and immunoglobulin-like domain-containing nogo receptor-interacting protein 3 (592 aa).

The signal sequence occupies residues 1–24; that stretch reads MTCWLCVLSLPLLLLPAAPPPAGG. In terms of domain architecture, LRRNT spans 25–54; the sequence is CPARCECTVQTRAVACTRRRLTAVPDGIPA. Residues 25 to 531 lie on the Extracellular side of the membrane; sequence CPARCECTVQ…LDLTTILVST (507 aa). LRR repeat units follow at residues 55–76, 79–100, 103–124, 127–148, 151–172, 175–196, 207–228, 247–268, 271–292, 295–316, and 319–340; these read ETRLLELSRNRIRCLNPGDLAA, ALEELDLSENAIAHVEPGAFAN, RLRVLRLRGNQLKLIPPGVFTR, NLTLLDLSENKLVILLDYTFQD, SLRRLEVGDNDLVFVSRRAFAG, ALEELTLERCNLTALSGESLGH, HLAIASLEDQNFRRLPGLLHLE, NLTSLSVTHTNITAVPAAALRH, HLTCLNLSHNPISTVPRGSFRD, RLRELHLAGALLAVVEPQAFLG, and QIRLLNLSNNLLSTLEESTFHS. Asn127 carries an N-linked (GlcNAc...) asparagine glycan. The N-linked (GlcNAc...) asparagine glycan is linked to Asn185. N-linked (GlcNAc...) asparagine glycans are attached at residues Asn247, Asn257, and Asn276. N-linked (GlcNAc...) asparagine glycosylation occurs at Asn324. One can recognise an LRRCT domain in the interval 352 to 406; the sequence is NPLACDCRLLWIVQRRKTLNFDGRLPACATPAEVRGDALRNLPDSVLFEYFVCRK. Positions 407–496 constitute an Ig-like C2-type domain; the sequence is PKIRERRLQR…GNDTYFATLT (90 aa). An intrachain disulfide couples Cys429 to Cys480. Residues Asn488 and Asn512 are each glycosylated (N-linked (GlcNAc...) asparagine). A helical transmembrane segment spans residues 532-552; that stretch reads AMGCITFLGVVLFCFVLLFVW. The Cytoplasmic portion of the chain corresponds to 553–592; sequence SRGRGQHKNNFSVEYSFRKVDGPAAAAGQGGARKFNMKMI.

It is found in the membrane. In Homo sapiens (Human), this protein is Leucine-rich repeat and immunoglobulin-like domain-containing nogo receptor-interacting protein 3 (LINGO3).